We begin with the raw amino-acid sequence, 44 residues long: Large ribosomal subunit protein bL34 (44 aa).

A disordered region spans residues 1–26 (MKMTFQPKKRQRAKVHGFRQRMKTAG). The segment covering 7 to 22 (PKKRQRAKVHGFRQRM) has biased composition (basic residues).

This sequence belongs to the bacterial ribosomal protein bL34 family.

This is Large ribosomal subunit protein bL34 from Agathobacter rectalis (strain ATCC 33656 / DSM 3377 / JCM 17463 / KCTC 5835 / VPI 0990) (Eubacterium rectale).